A 171-amino-acid chain; its full sequence is uncharacterized protein (171 aa).

This is an uncharacterized protein from Mycoplasma genitalium (strain ATCC 33530 / DSM 19775 / NCTC 10195 / G37) (Mycoplasmoides genitalium).